Reading from the N-terminus, the 585-residue chain is Protein cereblon (585 aa).

Disordered stretches follow at residues 1–109 (MDEE…DLES) and 156–195 (FSQE…IGFD). Positions 80–95 (QDDTASEGSHPSSDMS) are enriched in polar residues. A compositionally biased stretch (basic and acidic residues) spans 158–167 (QERRRSRTSE). A compositionally biased stretch (pro residues) spans 178–189 (VDPPPQQPPRPP). The Lon N-terminal domain occupies 225–451 (HMLIFLHQHI…LIKSTFKDET (227 aa)). Residues 450-559 (ETLFFCRYCN…LAGSSVRIGK (110 aa)) form the CULT domain. Positions 455, 458, 524, and 527 each coordinate Zn(2+).

This sequence belongs to the CRBN family. As to quaternary structure, likely a component of a DCX (DDB1-CUL4-X-box) protein ligase complex. May interact with pic/DDB1. Ubiquitinated. As to expression, expressed in the fat body (at protein level).

It localises to the nucleus. It functions in the pathway protein modification; protein ubiquitination. Functionally, substrate recognition component of a DCX (DDB1-CUL4-X-box) E3 protein ligase complex that mediates the ubiquitination and subsequent proteasomal degradation of target proteins. Has an essential role in mediating growth by negatively regulating insulin signaling. It also has a role in maintaining presynaptic function in the neuromuscular junction synapses of third-instar larvae. The chain is Protein cereblon from Drosophila melanogaster (Fruit fly).